Reading from the N-terminus, the 307-residue chain is Putative serine/threonine-protein phosphatase C22H10.04 (307 aa).

4 residues coordinate Mn(2+): D51, H53, D79, and N111. H112 functions as the Proton donor in the catalytic mechanism. H161 and H236 together coordinate Mn(2+).

It belongs to the PPP phosphatase family. PP-X subfamily. Mn(2+) is required as a cofactor.

It carries out the reaction O-phospho-L-seryl-[protein] + H2O = L-seryl-[protein] + phosphate. It catalyses the reaction O-phospho-L-threonyl-[protein] + H2O = L-threonyl-[protein] + phosphate. The sequence is that of Putative serine/threonine-protein phosphatase C22H10.04 from Schizosaccharomyces pombe (strain 972 / ATCC 24843) (Fission yeast).